Here is a 98-residue protein sequence, read N- to C-terminus: Putative defensin-like protein 233 (98 aa).

A signal peptide spans 1-28 (MGMWCTTLFMVSCVSICLILSHVQEVEA). 4 cysteine pairs are disulfide-bonded: cysteine 35–cysteine 96, cysteine 45–cysteine 70, cysteine 53–cysteine 86, and cysteine 68–cysteine 88.

This sequence belongs to the DEFL family. In terms of tissue distribution, expressed at least in stem, root, rosette leaves and flower buds.

The protein resides in the secreted. This Arabidopsis thaliana (Mouse-ear cress) protein is Putative defensin-like protein 233 (SCRL22).